The sequence spans 281 residues: Biotin synthase (281 aa).

The region spanning 1–230 is the Radical SAM core domain; that stretch reads MNQKIFLCSI…AQRIMVAGGR (230 aa). Residues Cys-18, Cys-22, and Cys-25 each contribute to the [4Fe-4S] cluster site. Residues Cys-62, Cys-97, and Arg-223 each coordinate [2Fe-2S] cluster.

Belongs to the radical SAM superfamily. Biotin synthase family. As to quaternary structure, homodimer. The cofactor is [4Fe-4S] cluster. It depends on [2Fe-2S] cluster as a cofactor.

It catalyses the reaction (4R,5S)-dethiobiotin + (sulfur carrier)-SH + 2 reduced [2Fe-2S]-[ferredoxin] + 2 S-adenosyl-L-methionine = (sulfur carrier)-H + biotin + 2 5'-deoxyadenosine + 2 L-methionine + 2 oxidized [2Fe-2S]-[ferredoxin]. Its pathway is cofactor biosynthesis; biotin biosynthesis; biotin from 7,8-diaminononanoate: step 2/2. In terms of biological role, catalyzes the conversion of dethiobiotin (DTB) to biotin by the insertion of a sulfur atom into dethiobiotin via a radical-based mechanism. The protein is Biotin synthase of Sulfurimonas denitrificans (strain ATCC 33889 / DSM 1251) (Thiomicrospira denitrificans (strain ATCC 33889 / DSM 1251)).